Consider the following 745-residue polypeptide: Phosphoribosylformylglycinamidine synthase subunit PurL (745 aa).

The active site involves histidine 47. Residues tyrosine 50 and lysine 90 each contribute to the ATP site. Position 92 (glutamate 92) interacts with Mg(2+). Substrate-binding positions include 93-96 and arginine 115; that span reads SHNH. Histidine 94 acts as the Proton acceptor in catalysis. Aspartate 116 provides a ligand contact to Mg(2+). Glutamine 240 is a binding site for substrate. Mg(2+) is bound at residue aspartate 268. Residue 312–314 coordinates substrate; that stretch reads ESQ. Residues asparagine 501 and glycine 538 each coordinate ATP. Asparagine 539 serves as a coordination point for Mg(2+). Serine 541 is a binding site for substrate.

This sequence belongs to the FGAMS family. As to quaternary structure, monomer. Part of the FGAM synthase complex composed of 1 PurL, 1 PurQ and 2 PurS subunits.

The protein resides in the cytoplasm. The enzyme catalyses N(2)-formyl-N(1)-(5-phospho-beta-D-ribosyl)glycinamide + L-glutamine + ATP + H2O = 2-formamido-N(1)-(5-O-phospho-beta-D-ribosyl)acetamidine + L-glutamate + ADP + phosphate + H(+). It participates in purine metabolism; IMP biosynthesis via de novo pathway; 5-amino-1-(5-phospho-D-ribosyl)imidazole from N(2)-formyl-N(1)-(5-phospho-D-ribosyl)glycinamide: step 1/2. Part of the phosphoribosylformylglycinamidine synthase complex involved in the purines biosynthetic pathway. Catalyzes the ATP-dependent conversion of formylglycinamide ribonucleotide (FGAR) and glutamine to yield formylglycinamidine ribonucleotide (FGAM) and glutamate. The FGAM synthase complex is composed of three subunits. PurQ produces an ammonia molecule by converting glutamine to glutamate. PurL transfers the ammonia molecule to FGAR to form FGAM in an ATP-dependent manner. PurS interacts with PurQ and PurL and is thought to assist in the transfer of the ammonia molecule from PurQ to PurL. The polypeptide is Phosphoribosylformylglycinamidine synthase subunit PurL (Leptospira interrogans serogroup Icterohaemorrhagiae serovar copenhageni (strain Fiocruz L1-130)).